A 159-amino-acid chain; its full sequence is Endoribonuclease YbeY (159 aa).

Positions 119, 123, and 129 each coordinate Zn(2+).

It belongs to the endoribonuclease YbeY family. It depends on Zn(2+) as a cofactor.

It localises to the cytoplasm. Single strand-specific metallo-endoribonuclease involved in late-stage 70S ribosome quality control and in maturation of the 3' terminus of the 16S rRNA. The chain is Endoribonuclease YbeY from Acinetobacter baylyi (strain ATCC 33305 / BD413 / ADP1).